A 352-amino-acid polypeptide reads, in one-letter code: Ferrochelatase (352 aa).

Fe cation is bound by residues His-222 and Glu-303.

The protein belongs to the ferrochelatase family.

It is found in the cytoplasm. The enzyme catalyses heme b + 2 H(+) = protoporphyrin IX + Fe(2+). The protein operates within porphyrin-containing compound metabolism; protoheme biosynthesis; protoheme from protoporphyrin-IX: step 1/1. Catalyzes the ferrous insertion into protoporphyrin IX. This is Ferrochelatase from Brucella canis (strain ATCC 23365 / NCTC 10854 / RM-666).